The chain runs to 247 residues: Capsid protein (247 aa).

Residues 1–40 (MWGTSNCACAKFQIRRRYARPYRRRHIRRYRRRRRHFRRR) form a DNA-binding region. Residues 15 to 44 (RRRYARPYRRRHIRRYRRRRRHFRRRRFTT) are nuclear localization signals.

This sequence belongs to the circoviridae capsid protein family. In terms of assembly, homomultimer. Assembles in the nucleus, presumably in an immature form, then migrates to the cytoplasm once assembled as mature virion. Interacts with Rep; this interaction relocates Rep into the nucleus.

Its subcellular location is the host nucleus. The protein resides in the virion. In terms of biological role, self-assembles to form the virion icosahedral capsid with a T=1 symmetry. This very small capsid (17 - 22 nm in diameter) allows the virus to be very stable in the environment and resistant to some disinfectants, including detergents. Essential for the initial attachment to heparan sulfate moieties and chondroitin sulfate B of the host cell surface proteoglycans. After attachment, the virus is endocytosed and traffics to the nucleus. The capsid protein binds and transports the viral genome and Rep across the nuclear envelope. This Beak and feather disease virus (BFDV) protein is Capsid protein (Cap).